The chain runs to 243 residues: Terpene cyclase nodB (243 aa).

3 helical membrane-spanning segments follow: residues 19–39, 50–70, and 75–95; these read ISDI…AGMI, MAPL…LIYP, and IEQG…YTAI. N-linked (GlcNAc...) asparagine glycosylation is present at asparagine 111. 4 helical membrane passes run 112–132, 134–154, 169–189, and 205–225; these read ITLI…ALAA, IGPA…LSVG, SYTL…FAIL, and LVLW…ICLW.

The protein belongs to the paxB family.

Its subcellular location is the membrane. The protein operates within secondary metabolite biosynthesis. Its function is as follows. Terpene cyclase; part of the gene cluster that mediates the biosynthesis of the indole diterpenes nodulisporic acids (NA). Nodulisporic acid A (NAA) and its chemically modified derivatives are of particular significance because of their highly potent insecticidal activity against blood-feeding arthropods and lack of observable adverse effects on mammals, in particular the tremogenicity associated with the paspaline-derived IDTs is not observed. The geranylgeranyl diphosphate (GGPP) synthase ggs1, localized outside of the cluster, is proposed to catalyze the first step in nodulisporic acid biosynthesis via conversion of farnesyl pyrophosphate and isopentyl pyrophosphate into geranylgeranyl pyrophosphate (GGPP). Condensation of indole-3-glycerol phosphate with GGPP by the prenyl transferase nodC then forms 3-geranylgeranylindole (3-GGI). Epoxidation by the FAD-dependent monooxygenase nodM leads to a single-epoxidized-GGI that is substrate of the terpene cyclase nodB for cyclization to yield emindole SB. The terminal methyl carbon, C28, of emindole SB is then oxidized by the cytochrome P450 monooxygenase nodW to produce nodulisporic acid F (NAF), the pentacyclic core of NAA. NAF is converted to nodulisporic acid E (NAE) via prenylation. This step is probably performed by one of the indole diterpene prenyltransferases nodD1 or nodD2. Several oxidation steps performed by the FAD-linked oxidoreductase nodO and one of the cytochrome P450 monooxygenase nodR, nodX or nodZ further convert NAE to nodulisporic acid D (NAD). NAD is substrate of cytochrome P450 monooxygenase nodJ to produce the precursor of nodulisporic acid C (NAC), converted to NAC by one of the indole diterpene prenyltransferases nodD1 or nodD2. The FAD-dependent monooxygenase nodY2 then oxidizes NAC to nodulisporic acid B (NAB). Finally NAB is converted to NAA by one of the cytochrome P450 monooxygenases nodR, nodX or nodZ. The sequence is that of Terpene cyclase nodB from Hypoxylon pulicicidum.